Here is a 247-residue protein sequence, read N- to C-terminus: DNA polymerase sliding clamp (247 aa).

It belongs to the PCNA family. As to quaternary structure, homotrimer. The subunits circularize to form a toroid; DNA passes through its center. Replication factor C (RFC) is required to load the toroid on the DNA.

Its function is as follows. Sliding clamp subunit that acts as a moving platform for DNA processing. Responsible for tethering the catalytic subunit of DNA polymerase and other proteins to DNA during high-speed replication. The protein is DNA polymerase sliding clamp of Halobacterium salinarum (strain ATCC 29341 / DSM 671 / R1).